Reading from the N-terminus, the 155-residue chain is Small ribosomal subunit protein uS9 (155 aa).

The protein belongs to the universal ribosomal protein uS9 family.

This Rhizobium johnstonii (strain DSM 114642 / LMG 32736 / 3841) (Rhizobium leguminosarum bv. viciae) protein is Small ribosomal subunit protein uS9.